A 261-amino-acid polypeptide reads, in one-letter code: Membrane protein insertase MisCA (261 aa).

The first 22 residues, 1–22 (MLLKRRIGLLLSMVGVFMLLAG), serve as a signal peptide directing secretion. Cys23 carries N-palmitoyl cysteine lipidation. Cys23 carries the S-diacylglycerol cysteine lipid modification. 5 consecutive transmembrane segments (helical) span residues 61 to 81 (YGLS…PLMI), 131 to 151 (LAGC…YHAI), 174 to 194 (YILP…MMAG), 204 to 224 (MMLW…PAAL), and 225 to 245 (SLYW…IKGP).

This sequence belongs to the OXA1/ALB3/YidC family. Type 2 subfamily. In terms of assembly, mostly monomeric, it may also form dimers. Interacts with SpoIIIAE. Forms a complex with the F(1)F(0) ATP synthase in which can be found the alpha, beta, gamma, delta and epsilon subunits of F(1) and a, b and subunits of F(0). YqgA is found in the same complex.

Its subcellular location is the cell membrane. Required for the insertion and/or proper folding and/or complex formation of integral membrane proteins into the membrane. Involved in integration of membrane proteins that insert both dependently and independently of the Sec translocase complex, as well as at least some lipoproteins. Also involved in protein secretion processes. Essential for sporulation by activating sigma factor SpoIIIG/SigG after engulfment is completed in the prespore, maybe by acting on SpoIIIAE. It has an overlapping, although partly distinct, function compared to YqjG(MisCB). This chain is Membrane protein insertase MisCA (misCA), found in Bacillus subtilis (strain 168).